Reading from the N-terminus, the 670-residue chain is Amyloid beta A4 precursor protein-binding family B member 1-interacting protein (670 aa).

Serine 55 carries the phosphoserine modification. Residues 179-266 (KKLVVKVHMD…KVLFLEKEER (88 aa)) form the Ras-associating domain. The region spanning 313-422 (VPELEGALYL…WVMGIRIAKY (110 aa)) is the PH domain. Residues 449–653 (VGTPMPAQPS…PGAPGNSEQD (205 aa)) form a disordered region. The span at 456–475 (QPSTVSSGLKTGTSQPNGQM) shows a compositional bias: polar residues. Serine 532 carries the phosphoserine modification. Threonine 534 bears the Phosphothreonine mark. The residue at position 537 (serine 537) is a Phosphoserine. Pro residues-rich tracts occupy residues 553-567 (PHPP…PPPP), 576-599 (LPPP…PPPA), 606-615 (LPPPPPPPPC), and 625-634 (PLPPKKPLVP).

It belongs to the MRL family. In terms of assembly, interacts, through the N-terminal Pro-rich region, with the WW domain of APBB1. Interacts with RAP1A, PFN1, VASP and ENAH. In terms of tissue distribution, ubiquitously expressed with high expression in the hematopoietic system.

Its subcellular location is the cell membrane. The protein localises to the cell projection. It is found in the lamellipodium. The protein resides in the cell junction. It localises to the focal adhesion. Its subcellular location is the cytoplasm. The protein localises to the cytoskeleton. In terms of biological role, appears to function in the signal transduction from Ras activation to actin cytoskeletal remodeling. Suppresses insulin-induced promoter activities through AP1 and SRE. Mediates Rap1-induced adhesion. The polypeptide is Amyloid beta A4 precursor protein-binding family B member 1-interacting protein (Apbb1ip) (Mus musculus (Mouse)).